A 210-amino-acid chain; its full sequence is MDNCLAAAALNGVDRRSLQRSARLALEVLERAKRRAVDWHALERPKGCMGVLAREAPHLEKQPAAGPQRVLPGEREERPPTLSASFRTMAEFMDYTSSQCGKYYSSVPEEGGATHVYRYHRGESKLHMCLDIGNGQRKDRKKTSLGPGGSYQISEHAPEASQPAENISKDLYIEVYPGTYSVTVGSNDLTKKTHVVAVDSGQSVDLVFPV.

Disordered stretches follow at residues 58–80 (HLEK…ERPP) and 136–162 (QRKD…EASQ).

As to quaternary structure, interacts with PRKACA and RELA. In terms of tissue distribution, expressed at high levels in adult heart and at lower levels in brain, testis, ovary and skeletal muscle. Up-regulated in some breast cancer cell lines. Isoform 1 and isoform 3 are expressed in fetal brain.

Its subcellular location is the nucleus. Its function is as follows. Enhances NF-kappa-B transcriptional activity by regulating the nuclear localization of the NF-kappa-B subunit RELA and promoting the phosphorylation of RELA by PRKACA. Regulates the effect of the cAMP-dependent protein kinase signaling pathway on the NF-kappa-B activation cascade. The protein is A-kinase-interacting protein 1 (AKIP1) of Homo sapiens (Human).